Consider the following 102-residue polypeptide: NADH-quinone oxidoreductase subunit K (102 aa).

The next 3 membrane-spanning stretches (helical) occupy residues 5 to 25 (LAHY…GIFL), 31 to 51 (IILL…FVAF), and 62 to 82 (VFVF…LAIL).

Belongs to the complex I subunit 4L family. NDH-1 is composed of 14 different subunits. Subunits NuoA, H, J, K, L, M, N constitute the membrane sector of the complex.

It localises to the cell inner membrane. The enzyme catalyses a quinone + NADH + 5 H(+)(in) = a quinol + NAD(+) + 4 H(+)(out). Its function is as follows. NDH-1 shuttles electrons from NADH, via FMN and iron-sulfur (Fe-S) centers, to quinones in the respiratory chain. The immediate electron acceptor for the enzyme in this species is believed to be ubiquinone. Couples the redox reaction to proton translocation (for every two electrons transferred, four hydrogen ions are translocated across the cytoplasmic membrane), and thus conserves the redox energy in a proton gradient. The chain is NADH-quinone oxidoreductase subunit K from Bordetella petrii (strain ATCC BAA-461 / DSM 12804 / CCUG 43448).